Reading from the N-terminus, the 464-residue chain is Glycine receptor subunit alpha-3 (464 aa).

Residues 1–33 (MAHVRHFRTLVSGFYFWEAALLLSLVATKETNS) form the signal peptide. Topologically, residues 34–255 (ARSRSAPMSP…RFHLERQMGY (222 aa)) are extracellular. N-linked (GlcNAc...) asparagine glycosylation is present at Asn-71. Cys-171 and Cys-185 are joined by a disulfide. Zn(2+) is bound by residues Glu-225 and Asp-227. Cys-231 and Cys-242 are oxidised to a cystine. 235–240 (YNTGKF) is a binding site for strychnine. A Zn(2+)-binding site is contributed by His-248. Residues 256-277 (YLIQMYIPSLLIVILSWVSFWI) traverse the membrane as a helical segment. At 278–282 (NMDAA) the chain is on the cytoplasmic side. Residues 283 to 303 (PARVALGITTVLTMTTQSSGS) form a helical membrane-spanning segment. The Extracellular segment spans residues 304–314 (RASLPKVSYVK). The helical transmembrane segment at 315-335 (AIDIWMAVCLLFVFSALLEYA) threads the bilayer. Topologically, residues 336–430 (AVNFVSRQHK…FIDRAKKIDT (95 aa)) are cytoplasmic. Ser-370 carries the post-translational modification Phosphoserine. Ser-379 bears the Phosphoserine; by PKA mark. Residues 431 to 451 (ISRACFPLAFLIFNIFYWVIY) traverse the membrane as a helical segment. The Extracellular portion of the chain corresponds to 452–464 (KILRHEDIHQQQD).

Belongs to the ligand-gated ion channel (TC 1.A.9) family. Glycine receptor (TC 1.A.9.3) subfamily. GLRA3 sub-subfamily. In terms of assembly, homopentamer (in vitro). Heteropentamer composed of GLRA3 and GLRB. Both homopentamers and heteropentamers form functional ion channels, but their characteristics are subtly different. Post-translationally, phosphorylated by PKA; this causes down-regulation of channel activity. Dephosphorylated in response to activation of HTR1A signaling; this increases channel activity. In terms of tissue distribution, detected in brainstem, also in neurons that control rhythmic breathing. Detected in superficial laminae of the dorsal horn of the thoracic spinal cord. Detected in dentate gyrus in hippocampus, especially in stratum granulare. Detected in the inner plexiform layer in the retina (at protein level). Detected in midbrain, thalamus, brain cortex, hippocampus, and at lower levels in cerebellum.

It is found in the postsynaptic cell membrane. Its subcellular location is the synapse. The protein localises to the perikaryon. It localises to the cell projection. The protein resides in the dendrite. It is found in the cell membrane. It carries out the reaction chloride(in) = chloride(out). With respect to regulation, inhibited by prostaglandin E2, probably via PKA-mediated phosphorylation at Ser-379. Functionally, glycine receptors are ligand-gated chloride channels. Channel opening is triggered by extracellular glycine. Channel characteristics depend on the subunit composition; heteropentameric channels display faster channel closure. Plays an important role in the down-regulation of neuronal excitability. Contributes to the generation of inhibitory postsynaptic currents. Contributes to increased pain perception in response to increased prostaglandin E2 levels. Plays a role in the regulation of breathing rhythm, especially of the duration of the postinspiratory phase. Plays a role in cellular responses to ethanol. The protein is Glycine receptor subunit alpha-3 (Glra3) of Mus musculus (Mouse).